The sequence spans 110 residues: Bowman-Birk type proteinase inhibitor (110 aa).

Positions 1–28 are cleaved as a signal peptide; sequence MVLMNKKAIMKLALMLFLLGFTANVVDA. A propeptide spanning residues 29 to 42 is cleaved from the precursor; it reads RFDSTSFITQVLSN. Intrachain disulfides connect Cys-50–Cys-103, Cys-51–Cys-66, Cys-54–Cys-99, Cys-56–Cys-64, Cys-73–Cys-80, Cys-77–Cys-92, and Cys-82–Cys-90.

Monomer.

Inhibitor of trypsin and of chymotrypsin. The protein is Bowman-Birk type proteinase inhibitor of Lens culinaris (Lentil).